A 204-amino-acid chain; its full sequence is Large ribosomal subunit protein eL15 (204 aa).

The protein belongs to the eukaryotic ribosomal protein eL15 family. As to quaternary structure, component of the large ribosomal subunit.

It is found in the cytoplasm. Functionally, component of the large ribosomal subunit. The ribosome is a large ribonucleoprotein complex responsible for the synthesis of proteins in the cell. This Cyprinus carpio (Common carp) protein is Large ribosomal subunit protein eL15 (rpl15).